The sequence spans 651 residues: Protein numb homolog (651 aa).

In terms of domain architecture, PID spans 33-193 (RTGKCSFPVK…ASRTTFTREG (161 aa)). Threonine 102 bears the Phosphothreonine; by AAK1 mark. A Phosphoserine modification is found at serine 194. A disordered region spans residues 228-255 (SSVAPGNTAPSPSSPTSPTSDATTSLEM). Residues 235 to 252 (TAPSPSSPTSPTSDATTS) are compositionally biased toward low complexity. The residue at position 243 (threonine 243) is a Phosphothreonine. Serine 244 is subject to Phosphoserine. 2 positions are modified to phosphoserine; by CaMK1: serine 276 and serine 295. Disordered regions lie at residues 419 to 483 (QSSG…SPFQ) and 623 to 651 (LENK…EIEL). Phosphoserine is present on serine 425. Threonine 436 carries the post-translational modification Phosphothreonine. Over residues 436 to 449 (TPSEADRWLEEVSK) the composition is skewed to basic and acidic residues. Residue serine 438 is modified to Phosphoserine. A compositionally biased stretch (low complexity) spans 453–466 (AQQPQASAAPLQPV). The segment covering 630-644 (RTNPSPTNPFSSDLQ) has biased composition (polar residues). The residue at position 634 (serine 634) is a Phosphoserine.

Interacts with SIAH1. Interacts with LNX. Interacts with CDH1. Interacts with TFAP2A and TFAP2B. Interacts with RALBP1 in a complex also containing EPN1 and TFAP2A during interphase and mitosis. Interacts with AAK1. May interact with DUOXA1. In terms of processing, phosphorylated on Ser-276 and Ser-295 by CaMK1. Post-translationally, isoform 1 and isoform 2 are ubiquitinated by LNX leading to their subsequent proteasomal degradation. Ubiquitinated; mediated by SIAH1 and leading to its subsequent proteasomal degradation.

The protein resides in the cell membrane. It is found in the endosome membrane. Its function is as follows. Regulates clathrin-mediated receptor endocytosis. Plays a role in the process of neurogenesis. Required throughout embryonic neurogenesis to maintain neural progenitor cells, also called radial glial cells (RGCs), by allowing their daughter cells to choose progenitor over neuronal cell fate. Not required for the proliferation of neural progenitor cells before the onset of neurogenesis. Also involved postnatally in the subventricular zone (SVZ) neurogenesis by regulating SVZ neuroblasts survival and ependymal wall integrity. May also mediate local repair of brain ventricular wall damage. The protein is Protein numb homolog of Homo sapiens (Human).